A 227-amino-acid polypeptide reads, in one-letter code: PKHD-type hydroxylase A1S_0473 (227 aa).

A Fe2OG dioxygenase domain is found at K78–S178. Fe cation contacts are provided by H96, D98, and H159. R169 contacts 2-oxoglutarate.

Fe(2+) is required as a cofactor. L-ascorbate serves as cofactor.

This is PKHD-type hydroxylase A1S_0473 from Acinetobacter baumannii (strain ATCC 17978 / DSM 105126 / CIP 53.77 / LMG 1025 / NCDC KC755 / 5377).